The sequence spans 610 residues: UvrABC system protein C (610 aa).

The region spanning 16–94 is the GIY-YIG domain; sequence SQPGVYRMYD…IKLYQPRYNV (79 aa). One can recognise a UVR domain in the interval 204 to 239; that stretch reads QQVLTRLIERMEQASQQLKFEDAARYRDQIQAVRQV.

It belongs to the UvrC family. In terms of assembly, interacts with UvrB in an incision complex.

It is found in the cytoplasm. In terms of biological role, the UvrABC repair system catalyzes the recognition and processing of DNA lesions. UvrC both incises the 5' and 3' sides of the lesion. The N-terminal half is responsible for the 3' incision and the C-terminal half is responsible for the 5' incision. The sequence is that of UvrABC system protein C from Photorhabdus laumondii subsp. laumondii (strain DSM 15139 / CIP 105565 / TT01) (Photorhabdus luminescens subsp. laumondii).